A 379-amino-acid chain; its full sequence is Cytochrome b (379 aa).

The next 4 helical transmembrane spans lie at 33 to 53 (FGSL…FLAM), 77 to 98 (WLIR…YLHI), 113 to 133 (WNIG…GYVL), and 178 to 198 (FFTF…LHLL). Heme b contacts are provided by His83 and His97. 2 residues coordinate heme b: His182 and His196. An a ubiquinone-binding site is contributed by His201. 4 helical membrane-spanning segments follow: residues 226-246 (YKDL…VLFS), 288-308 (LGGV…PLLH), 320-340 (FSQT…WIGG), and 347-367 (FIII…VVMP).

Belongs to the cytochrome b family. The cytochrome bc1 complex contains 3 respiratory subunits (MT-CYB, CYC1 and UQCRFS1), 2 core proteins (UQCRC1 and UQCRC2) and probably 6 low-molecular weight proteins. Heme b is required as a cofactor.

It localises to the mitochondrion inner membrane. Component of the ubiquinol-cytochrome c reductase complex (complex III or cytochrome b-c1 complex) that is part of the mitochondrial respiratory chain. The b-c1 complex mediates electron transfer from ubiquinol to cytochrome c. Contributes to the generation of a proton gradient across the mitochondrial membrane that is then used for ATP synthesis. The protein is Cytochrome b (MT-CYB) of Iguana iguana (Common iguana).